The following is a 203-amino-acid chain: MTSAVGTSGTAITSRVHSLNRPNMVSVGTIVWLSSELMFFAGLFAFYFSARAQAGGNWPPPPTELNLYQAVPVTLVLIASSFTCQMGVFAAERGDIFGLRRWYVITFLMGLFFVLGQAYEYRNLMSHGTSIPSSAYGSVFYLATGFHGLHVTGGLIAFIFLLVRTGMSKFTPAQATASIVVSYYWHFVDIVWIALFTVIYFIR.

5 helical membrane passes run 30-50 (IVWL…YFSA), 71-91 (VPVT…VFAA), 96-116 (IFGL…FVLG), 143-163 (ATGF…FLLV), and 179-199 (IVVS…FTVI).

Belongs to the cytochrome c oxidase subunit 3 family.

The protein resides in the cell membrane. It catalyses the reaction 4 Fe(II)-[cytochrome c] + O2 + 8 H(+)(in) = 4 Fe(III)-[cytochrome c] + 2 H2O + 4 H(+)(out). The polypeptide is Probable cytochrome c oxidase subunit 3 (ctaE) (Mycobacterium bovis (strain ATCC BAA-935 / AF2122/97)).